Here is a 40-residue protein sequence, read N- to C-terminus: Photosystem II reaction center protein J (40 aa).

A helical transmembrane segment spans residues 8–28; the sequence is IPLWLISTVTGTLVIGLMGIF.

Belongs to the PsbJ family. As to quaternary structure, PSII is composed of 1 copy each of membrane proteins PsbA, PsbB, PsbC, PsbD, PsbE, PsbF, PsbH, PsbI, PsbJ, PsbK, PsbL, PsbM, PsbT, PsbX, PsbY, PsbZ, Psb30/Ycf12, at least 3 peripheral proteins of the oxygen-evolving complex and a large number of cofactors. It forms dimeric complexes.

Its subcellular location is the plastid. It is found in the chloroplast thylakoid membrane. Its function is as follows. One of the components of the core complex of photosystem II (PSII). PSII is a light-driven water:plastoquinone oxidoreductase that uses light energy to abstract electrons from H(2)O, generating O(2) and a proton gradient subsequently used for ATP formation. It consists of a core antenna complex that captures photons, and an electron transfer chain that converts photonic excitation into a charge separation. The chain is Photosystem II reaction center protein J from Ginkgo biloba (Ginkgo).